The sequence spans 80 residues: Small ribosomal subunit protein uS17 (80 aa).

This sequence belongs to the universal ribosomal protein uS17 family. As to quaternary structure, part of the 30S ribosomal subunit.

Functionally, one of the primary rRNA binding proteins, it binds specifically to the 5'-end of 16S ribosomal RNA. The protein is Small ribosomal subunit protein uS17 of Brucella abortus (strain S19).